A 905-amino-acid chain; its full sequence is DNA mismatch repair protein MutS (905 aa).

The tract at residues leucine 388–proline 410 is disordered. Glycine 638–serine 645 contributes to the ATP binding site. Positions arginine 826–proline 847 are disordered. Positions glycine 831–threonine 840 are enriched in polar residues.

Belongs to the DNA mismatch repair MutS family.

This protein is involved in the repair of mismatches in DNA. It is possible that it carries out the mismatch recognition step. This protein has a weak ATPase activity. The protein is DNA mismatch repair protein MutS of Nitratidesulfovibrio vulgaris (strain DP4) (Desulfovibrio vulgaris).